A 632-amino-acid chain; its full sequence is Chaperone protein HtpG (632 aa).

The tract at residues 1 to 343 is a; substrate-binding; sequence MSEQTINNKE…SNDLALNVSR (343 aa). Residues 344 to 560 form a b region; it reads EILQDNKVTQ…DFEMGTQMAK (217 aa). The tract at residues 561 to 632 is c; it reads LLEAAGQAAP…LSAMNQLLSK (72 aa).

The protein belongs to the heat shock protein 90 family. Homodimer.

The protein localises to the cytoplasm. Its function is as follows. Molecular chaperone. Has ATPase activity. This is Chaperone protein HtpG from Aliivibrio salmonicida (strain LFI1238) (Vibrio salmonicida (strain LFI1238)).